The primary structure comprises 396 residues: Elongation factor Tu (396 aa).

Residues 10-206 enclose the tr-type G domain; sequence KPHVNVGTIG…AVDAYIPTPQ (197 aa). A G1 region spans residues 19–26; that stretch reads GHVDHGKT. 19-26 lines the GTP pocket; sequence GHVDHGKT. Thr-26 is a binding site for Mg(2+). Residues 60–64 are G2; it reads GITIA. Residues 81–84 form a G3 region; it reads DCPG. GTP is bound by residues 81 to 85 and 136 to 139; these read DCPGH and NKVD. Positions 136 to 139 are G4; the sequence is NKVD. A G5 region spans residues 174-176; sequence SAL.

It belongs to the TRAFAC class translation factor GTPase superfamily. Classic translation factor GTPase family. EF-Tu/EF-1A subfamily. As to quaternary structure, monomer.

It localises to the cytoplasm. The enzyme catalyses GTP + H2O = GDP + phosphate + H(+). Its function is as follows. GTP hydrolase that promotes the GTP-dependent binding of aminoacyl-tRNA to the A-site of ribosomes during protein biosynthesis. This Anaeromyxobacter dehalogenans (strain 2CP-C) protein is Elongation factor Tu.